Consider the following 803-residue polypeptide: Volume-regulated anion channel subunit LRRC8C (803 aa).

Topologically, residues 1–22 (MIPVTEFRQFSEQQPAFRVLKP) are cytoplasmic. A helical membrane pass occupies residues 23–47 (WWDVFTDYLSVAMLMIGVFGCTLQV). The Extracellular portion of the chain corresponds to 48-124 (MQDKIICLPK…CYERALHWYA (77 aa)). Cystine bridges form between cysteine 54–cysteine 308 and cysteine 115–cysteine 293. Residues asparagine 64 and asparagine 70 are each glycosylated (N-linked (GlcNAc...) asparagine). A helical transmembrane segment spans residues 125–144 (KYFPYLVLIHTLVFMLCSNF). Topologically, residues 145–262 (WFKFPGSSSK…EEGDILYAMY (118 aa)) are cytoplasmic. A disordered region spans residues 177–209 (EVSGEDSEEKDNRKNNMNRSNTIQSGPEDSLVN). Residues 191-209 (NNMNRSNTIQSGPEDSLVN) show a composition bias toward polar residues. A phosphoserine mark is found at serine 212 and serine 215. The chain crosses the membrane as a helical span at residues 263–284 (VRQTVLKVIKFLIIIAYNSALV). The Extracellular portion of the chain corresponds to 285–314 (SKVQFTVDCNVDIQDMTGYKNFSCNHTMAH). Residues 315–339 (LFSKLSFCYLCFVSIYGLTCLYTLY) form a helical membrane-spanning segment. Over 340–803 (WLFYRSLREY…SDVREQMKTE (464 aa)) the chain is Cytoplasmic. 17 LRR repeats span residues 397-420 (ENKL…KLQT), 421-443 (NAHN…VFEI), 446-466 (LQSL…IAQL), 467-488 (DNLQ…ALSF), 490-513 (KENL…MYGL), 515-537 (NLEE…TLES), 541-563 (LKSL…VVDV), 565-587 (SHLQ…NLKK), 588-611 (MTNL…VFSL), 613-635 (SLQE…SFQH), 636-659 (LRKL…IKKL), 660-682 (TSLE…LFLC), 684-705 (KIRY…IGVL), 706-728 (QSLQ…LYFC), 730-751 (KLKT…IGNL), 753-774 (FLSY…LGDC), and 776-799 (ALKR…VREQ).

The protein belongs to the LRRC8 family. In terms of assembly, heterohexamer; oligomerizes with other LRRC8 proteins (LRRC8A, LRRC8B, LRRC8D and/or LRRC8E) to form a heterohexamer. Homoheptamer; inactive, likely because it is not targeted to the plasma membrane in the absence of LRRC8A. In vivo, the subunit composition may depend primarily on expression levels, and heterooligomeric channels containing various proportions of the different LRRC8 proteins may coexist. As to expression, expressed at highest levels in skeletal muscle, and at moderate levels in heart, lung and peripheral blood leukocytes.

The protein localises to the cell membrane. Its subcellular location is the endoplasmic reticulum membrane. The enzyme catalyses chloride(in) = chloride(out). It catalyses the reaction iodide(out) = iodide(in). It carries out the reaction taurine(out) = taurine(in). The catalysed reaction is 2',3'-cGAMP(out) = 2',3'-cGAMP(in). Functionally, non-essential component of the volume-regulated anion channel (VRAC, also named VSOAC channel), an anion channel required to maintain a constant cell volume in response to extracellular or intracellular osmotic changes. The VRAC channel conducts iodide better than chloride and can also conduct organic osmolytes like taurine. Plays a redundant role in the efflux of amino acids, such as aspartate and glutamate, in response to osmotic stress. The VRAC channel also mediates transport of immunoreactive cyclic dinucleotide GMP-AMP (2'-3'-cGAMP), an immune messenger produced in response to DNA virus in the cytosol. Channel activity requires LRRC8A plus at least one other family member (LRRC8B, LRRC8C, LRRC8D or LRRC8E); channel characteristics depend on the precise subunit composition. The polypeptide is Volume-regulated anion channel subunit LRRC8C (Homo sapiens (Human)).